The sequence spans 215 residues: ATP-dependent dethiobiotin synthetase BioD (215 aa).

Residue 13–18 (DIGKTI) participates in ATP binding. A Mg(2+)-binding site is contributed by Thr17. Residue Lys38 is part of the active site. A substrate-binding site is contributed by Thr42. Residues Asp50, 115 to 118 (EGAG), and 175 to 176 (NH) contribute to the ATP site. Residues Asp50 and Glu115 each contribute to the Mg(2+) site.

The protein belongs to the dethiobiotin synthetase family. As to quaternary structure, homodimer. It depends on Mg(2+) as a cofactor.

The protein localises to the cytoplasm. The enzyme catalyses (7R,8S)-7,8-diammoniononanoate + CO2 + ATP = (4R,5S)-dethiobiotin + ADP + phosphate + 3 H(+). Its pathway is cofactor biosynthesis; biotin biosynthesis; biotin from 7,8-diaminononanoate: step 1/2. Functionally, catalyzes a mechanistically unusual reaction, the ATP-dependent insertion of CO2 between the N7 and N8 nitrogen atoms of 7,8-diaminopelargonic acid (DAPA, also called 7,8-diammoniononanoate) to form a ureido ring. The sequence is that of ATP-dependent dethiobiotin synthetase BioD from Neisseria meningitidis serogroup A / serotype 4A (strain DSM 15465 / Z2491).